A 209-amino-acid chain; its full sequence is FK506-binding protein 2B (209 aa).

Residues M1 to A19 form the signal peptide. The PPIase FKBP-type domain maps to G47–K136. Residues F157–F177 form a helical membrane-spanning segment. Residues K178–K207 adopt a coiled-coil conformation. The segment at E190–E209 is disordered. A compositionally biased stretch (basic and acidic residues) spans S200–E209.

This sequence belongs to the FKBP-type PPIase family. FKBP2 subfamily.

Its subcellular location is the membrane. It catalyses the reaction [protein]-peptidylproline (omega=180) = [protein]-peptidylproline (omega=0). With respect to regulation, inhibited by both FK506 and rapamycin. Functionally, PPIases accelerate the folding of proteins. It catalyzes the cis-trans isomerization of proline imidic peptide bonds in oligopeptides. This Rhizopus delemar (strain RA 99-880 / ATCC MYA-4621 / FGSC 9543 / NRRL 43880) (Mucormycosis agent) protein is FK506-binding protein 2B (FKBP3).